The primary structure comprises 1342 residues: DNA-directed RNA polymerase subunit beta (1342 aa).

The protein belongs to the RNA polymerase beta chain family. As to quaternary structure, the RNAP catalytic core consists of 2 alpha, 1 beta, 1 beta' and 1 omega subunit. When a sigma factor is associated with the core the holoenzyme is formed, which can initiate transcription.

The enzyme catalyses RNA(n) + a ribonucleoside 5'-triphosphate = RNA(n+1) + diphosphate. Functionally, DNA-dependent RNA polymerase catalyzes the transcription of DNA into RNA using the four ribonucleoside triphosphates as substrates. This chain is DNA-directed RNA polymerase subunit beta, found in Cronobacter sakazakii (strain ATCC BAA-894) (Enterobacter sakazakii).